We begin with the raw amino-acid sequence, 696 residues long: MADQVQDVHPMEWGPGKTPQGRARLPSSFDATVKDPVAAVHSENLVCRVPMHRIRHLESLVYDLMQNSSANVNQEQVGVTPSPGDQPHVPDYPTPSAAHAPSTNQEPASAAVSPADYGSMQSTGGGANYVGSAHWAAVLDGIAELKDHLDNEESHHSDSQGVDPPCLQVTGPQLLYGCPKPADKDEILSSIPARSVVDRLVSRYFNSFEMSPAVLHSVQFLKEYEEFWEDPQTTSPIWLGLLFTIMCLATQFEKSRLDPGVQSPAVLSMERELQEMVDTFRLRIPQCLVLGSYAKGGPFVLETLMLYIAAEIFLSNDAEIEIWILMGNTVQLALHMGYHRDPKHFKGLSPFTAEMRRRIWATIVEMDLGLSAQMGLPRMIKHWQTDTQEPSNFQDSDFDSATVEMPPSRLNTDLTPILYRLVKARLMTTIGYIWDFSADVRPYPYTEVQKMDDKLDQARKSIPECLKWHSMARNITDSPQHIMQKVILETVFYRAKIVLHRKYMFLPLAQSASSRRIVLESALKLLDYQHMLQEETQPFCQLYQERWRVSSLVNHDFLLATSILCYYLQHARGATPQLSESASFDETIMTSLSRSHDIWLQSSNSSKEARKVVRALAVILGRVNTPSADAAGESGLVFGLQSTYPPSTTNDYSQAPMITPTAEWQEMDGQSQWLPGPRVIQRLTYDMQRQQMRWGL.

Disordered regions lie at residues 1-24 (MADQ…GRAR) and 73-117 (NQEQ…PADY).

It is found in the nucleus. In terms of biological role, transcription factor that regulates the expression of the gene cluster that mediates the biosynthesis of Equisetin. The sequence is that of Equisetin cluster transcription factor eqxF from Fusarium heterosporum.